The chain runs to 464 residues: Argininosuccinate lyase (464 aa).

This sequence belongs to the lyase 1 family. Argininosuccinate lyase subfamily.

The protein resides in the cytoplasm. The catalysed reaction is 2-(N(omega)-L-arginino)succinate = fumarate + L-arginine. The protein operates within amino-acid biosynthesis; L-arginine biosynthesis; L-arginine from L-ornithine and carbamoyl phosphate: step 3/3. The sequence is that of Argininosuccinate lyase from Stutzerimonas stutzeri (strain A1501) (Pseudomonas stutzeri).